The chain runs to 266 residues: tRNA (guanine-N(7)-)-methyltransferase (266 aa).

Positions 1-32 are disordered; it reads MSDHGRMHIPESGLATPAAAHSDDPPHPHFNR. S-adenosyl-L-methionine is bound by residues glutamate 96, glutamate 121, aspartate 148, and aspartate 171. Residue aspartate 171 is part of the active site. The substrate site is built by lysine 175 and aspartate 207.

It belongs to the class I-like SAM-binding methyltransferase superfamily. TrmB family.

It carries out the reaction guanosine(46) in tRNA + S-adenosyl-L-methionine = N(7)-methylguanosine(46) in tRNA + S-adenosyl-L-homocysteine. The protein operates within tRNA modification; N(7)-methylguanine-tRNA biosynthesis. In terms of biological role, catalyzes the formation of N(7)-methylguanine at position 46 (m7G46) in tRNA. The polypeptide is tRNA (guanine-N(7)-)-methyltransferase (Mycolicibacterium vanbaalenii (strain DSM 7251 / JCM 13017 / BCRC 16820 / KCTC 9966 / NRRL B-24157 / PYR-1) (Mycobacterium vanbaalenii)).